The primary structure comprises 392 residues: Solute carrier family 35 member B1 (392 aa).

The segment at 1 to 40 (MSLTKKIKNEKSLKQEKQTDQLKSNLRNNNNNINNKSKPK) is disordered. A compositionally biased stretch (basic and acidic residues) spans 7–20 (IKNEKSLKQEKQTD). The segment covering 25-35 (NLRNNNNNINN) has biased composition (low complexity). The next 9 membrane-spanning stretches (helical) occupy residues 57-77 (ELFF…YGLV), 97-117 (AFLL…VSLV), 124-144 (NTPF…TFLS), 155-175 (TQVL…LLLF), 179-199 (YPFL…LFML), 215-235 (HLFG…MGPF), 247-267 (ATSM…IMAF), 285-305 (VIKL…FIFL), and 341-361 (LQWA…YISY). The Di-lysine motif motif lies at 389-392 (KKSL).

Belongs to the nucleotide-sugar transporter family. SLC35B subfamily.

The protein resides in the endoplasmic reticulum membrane. In terms of biological role, probable sugar transporter. In Dictyostelium discoideum (Social amoeba), this protein is Solute carrier family 35 member B1 (slc35b1).